A 126-amino-acid polypeptide reads, in one-letter code: Flagellar protein FliT (126 aa).

Residues 1–50 (MVSPHRLLKDYQQLLSLSQKILHLAISGQWDTLVEQEIVYVQSVEGLVNT) form a required for homodimerization region. The tract at residues 60–98 (MRLHLRQILQEVMDNEAKVKQLLQKRMDELSSLMGQSLK) is fliD binding.

This sequence belongs to the FliT family. Homodimer. Interacts with FliD and FlhC.

It localises to the cytoplasm. The protein localises to the cytosol. Functionally, dual-function protein that regulates the transcription of class 2 flagellar operons and that also acts as an export chaperone for the filament-capping protein FliD. As a transcriptional regulator, acts as an anti-FlhDC factor; it directly binds FlhC, thus inhibiting the binding of the FlhC/FlhD complex to class 2 promoters, resulting in decreased expression of class 2 flagellar operons. As a chaperone, effects FliD transition to the membrane by preventing its premature polymerization, and by directing it to the export apparatus. This Pectobacterium atrosepticum (strain SCRI 1043 / ATCC BAA-672) (Erwinia carotovora subsp. atroseptica) protein is Flagellar protein FliT.